Here is a 345-residue protein sequence, read N- to C-terminus: Beta-2-glycoprotein 1 (345 aa).

Residues methionine 1 to alanine 19 form the signal peptide. 4 consecutive Sushi domains span residues arginine 21–proline 81, arginine 82–arginine 139, valine 140–glutamate 202, and valine 203–alanine 262. 11 disulfides stabilise this stretch: cysteine 23/cysteine 66, cysteine 51/cysteine 79, cysteine 84/cysteine 124, cysteine 110/cysteine 137, cysteine 142/cysteine 188, cysteine 174/cysteine 200, cysteine 205/cysteine 248, cysteine 234/cysteine 260, cysteine 264/cysteine 315, cysteine 300/cysteine 325, and cysteine 307/cysteine 345. Residue threonine 33 is glycosylated (O-linked (GalNAc...) threonine). N-linked (GlcNAc...) asparagine glycans are attached at residues asparagine 117, asparagine 162, asparagine 183, and asparagine 193. N-linked (GlcNAc...) asparagine glycosylation is present at asparagine 253. A sushi-like region spans residues serine 263 to cysteine 345.

In terms of tissue distribution, expressed by the liver and secreted in plasma.

It localises to the secreted. Functionally, binds to various kinds of negatively charged substances such as heparin, phospholipids, and dextran sulfate. May prevent activation of the intrinsic blood coagulation cascade by binding to phospholipids on the surface of damaged cells. In Canis lupus familiaris (Dog), this protein is Beta-2-glycoprotein 1 (APOH).